The sequence spans 115 residues: MKCGVCLCVVMAVLAAGALAQPVVPVEAVDPMEQRAEEAPRRQLRAVLRPDSEPRARLGALLARYIQQVRKAPSGRMSVLKNLQGLDPSHRISDRDYMGWMDFGRRSAEDYEYPS.

The first 20 residues, 1–20 (MKCGVCLCVVMAVLAAGALA), serve as a signal peptide directing secretion. Propeptides lie at residues 21–45 (QPVV…RQLR) and 47–63 (VLRP…ALLA). A Sulfotyrosine modification is found at tyrosine 97. The residue at position 103 (phenylalanine 103) is a Phenylalanine amide. Residues 107 to 115 (SAEDYEYPS) constitute a propeptide that is removed on maturation. Tyrosine 111 and tyrosine 113 each carry sulfotyrosine.

Belongs to the gastrin/cholecystokinin family. Binds to CCK-A receptors in the pancreas and CCK-B receptors in the brain. The precursor is cleaved by proteases to produce a number of active cholecystokinins. In terms of processing, sulfation of Tyr-97 is essential for receptor activation. The shortest form (CCK8) is predominantly found in the brain, whereas the larger ones are found in the intestine.

The protein localises to the secreted. Functionally, this peptide hormone induces gall bladder contraction and the release of pancreatic enzymes in the gut. Its function in the brain is not clear. Binding to CCK-A receptors stimulates amylase release from the pancreas, binding to CCK-B receptors stimulates gastric acid secretion. This Rattus norvegicus (Rat) protein is Cholecystokinin (Cck).